A 479-amino-acid polypeptide reads, in one-letter code: Lactaldehyde dehydrogenase (479 aa).

Leu150 serves as a coordination point for NAD(+). Residue Arg161 coordinates (S)-lactate. Residues 176-179, Gln214, and Ser230 each bind NAD(+); that span reads KPSE. Glu251 contributes to the (S)-lactate binding site. Catalysis depends on residues Glu251 and Cys285. Residue Asn286 participates in (S)-lactate binding. Arg336 is an NAD(+) binding site. Residues Glu443 and His449 each contribute to the (S)-lactate site.

It belongs to the aldehyde dehydrogenase family. In terms of assembly, homotetramer.

The enzyme catalyses (S)-lactaldehyde + NAD(+) + H2O = (S)-lactate + NADH + 2 H(+). It catalyses the reaction glycolaldehyde + NAD(+) + H2O = glycolate + NADH + 2 H(+). The protein operates within carbohydrate degradation; L-fucose degradation. Its pathway is carbohydrate degradation; L-rhamnose degradation. With respect to regulation, substrate inhibition is very strong with lactaldehyde, diminishing progressively with glycolaldehyde, glyceraldehyde or methylglyoxal. Inhibited by p-hydroxy mercuribenzoate and by some cations, including Mn(2+), Ca(2+), Cu(2+) and Zn(2+). Inhibited by NADH. Functionally, catalyzes the irreversible oxidation of L-lactaldehyde to L-lactate. Also shows high activity with glycolaldehyde and L-glyceraldehyde. Has weaker activity with various aldehydes such as methylglyoxal, propionaldehyde or benzaldehyde. Involved in the degradation of lactaldehyde produced during metabolism of L-fucose and L-rhamnose. It may be involved in several other metabolic pathways. This Escherichia coli (strain K12) protein is Lactaldehyde dehydrogenase (aldA).